The sequence spans 304 residues: Glutaminase (304 aa).

Substrate is bound by residues Ser-63, Asn-113, Glu-157, Asn-164, Tyr-188, Tyr-240, and Val-258.

The protein belongs to the glutaminase family. Homotetramer.

It carries out the reaction L-glutamine + H2O = L-glutamate + NH4(+). The chain is Glutaminase from Christiangramia forsetii (strain DSM 17595 / CGMCC 1.15422 / KT0803) (Gramella forsetii).